Consider the following 446-residue polypeptide: Putative hydrolase YbfO (446 aa).

A signal peptide spans 1–28; that stretch reads MKRMIVRMTLPLLIVCLAFSSFSASARA.

In Bacillus subtilis (strain 168), this protein is Putative hydrolase YbfO (ybfO).